The chain runs to 350 residues: tRNA uridine(34) hydroxylase (350 aa).

One can recognise a Rhodanese domain in the interval 146–240 (DDPDTLFVDM…YARKAKEQGL (95 aa)). C200 acts as the Cysteine persulfide intermediate in catalysis.

This sequence belongs to the TrhO family.

It catalyses the reaction uridine(34) in tRNA + AH2 + O2 = 5-hydroxyuridine(34) in tRNA + A + H2O. Functionally, catalyzes oxygen-dependent 5-hydroxyuridine (ho5U) modification at position 34 in tRNAs. The protein is tRNA uridine(34) hydroxylase of Yersinia enterocolitica serotype O:8 / biotype 1B (strain NCTC 13174 / 8081).